The following is a 65-amino-acid chain: Beta-defensin 41 (65 aa).

An N-terminal signal peptide occupies residues 1-19; that stretch reads MKFHLFFFILLFGATILTA. Disulfide bonds link Cys-35–Cys-63, Cys-42–Cys-56, and Cys-46–Cys-64.

It belongs to the beta-defensin family. In terms of tissue distribution, isoform 2 is epididymis-specific and expressed mainly in the proximal caput.

The protein localises to the secreted. Has bactericidal activity. In terms of biological role, isoform 2 may play a role in the antimicrobial protection of sperm and urogenital tract epithelia. This chain is Beta-defensin 41, found in Mus musculus (Mouse).